Here is a 345-residue protein sequence, read N- to C-terminus: Biotin synthase (345 aa).

Positions 67–295 constitute a Radical SAM core domain; it reads YKVQLASLLS…KSRIRLSAGR (229 aa). Residues Cys82, Cys86, and Cys89 each coordinate [4Fe-4S] cluster. Cys126, Cys158, Cys218, and Arg290 together coordinate [2Fe-2S] cluster.

This sequence belongs to the radical SAM superfamily. Biotin synthase family. As to quaternary structure, homodimer. [4Fe-4S] cluster serves as cofactor. The cofactor is [2Fe-2S] cluster.

It carries out the reaction (4R,5S)-dethiobiotin + (sulfur carrier)-SH + 2 reduced [2Fe-2S]-[ferredoxin] + 2 S-adenosyl-L-methionine = (sulfur carrier)-H + biotin + 2 5'-deoxyadenosine + 2 L-methionine + 2 oxidized [2Fe-2S]-[ferredoxin]. The protein operates within cofactor biosynthesis; biotin biosynthesis; biotin from 7,8-diaminononanoate: step 2/2. Its function is as follows. Catalyzes the conversion of dethiobiotin (DTB) to biotin by the insertion of a sulfur atom into dethiobiotin via a radical-based mechanism. The sequence is that of Biotin synthase from Prochlorococcus marinus (strain NATL2A).